The following is a 509-amino-acid chain: Dihydrolipoyl dehydrogenase, mitochondrial (509 aa).

The N-terminal 35 residues, 1–35, are a transit peptide targeting the mitochondrion; that stretch reads MQSWSRVYRSLAKKGHFNRISHGLQGVSSVPLRTY. Lys-66 is modified (N6-acetyllysine; alternate). An N6-succinyllysine; alternate modification is found at Lys-66. Residues 71 to 80 and Lys-89 each bind FAD; that span reads EKNETLGGTC. Residues Cys-80 and Cys-85 are joined by a disulfide bond. Lys-104, Lys-122, Lys-132, and Lys-143 each carry N6-acetyllysine; alternate. 4 positions are modified to N6-succinyllysine; alternate: Lys-104, Lys-122, Lys-132, and Lys-143. Gly-154 is an FAD binding site. N6-succinyllysine occurs at positions 159 and 166. Residue 183–185 coordinates FAD; it reads TGS. NAD(+)-binding positions include 220 to 227 and Glu-243; that span reads GAGVIGVE. Residues Lys-273 and Lys-277 each carry the N6-succinyllysine modification. NAD(+) is bound at residue Val-278. 2 positions are modified to phosphoserine: Ser-285 and Ser-297. Gly-314 contributes to the NAD(+) binding site. Lys-334 bears the N6-acetyllysine; alternate mark. Position 334 is an N6-succinyllysine; alternate (Lys-334). Lys-346 is modified (N6-acetyllysine). Residues Asp-355 and 361 to 364 each bind FAD; that span reads MLAH. An N6-acetyllysine; alternate modification is found at Lys-410. Lys-410 carries the N6-succinyllysine; alternate modification. An N6-acetyllysine mark is found at Lys-417 and Lys-420. Lys-430 bears the N6-succinyllysine mark. The active-site Proton acceptor is His-487. Position 505 is an N6-acetyllysine; alternate (Lys-505). Lys-505 carries the N6-succinyllysine; alternate modification.

The protein belongs to the class-I pyridine nucleotide-disulfide oxidoreductase family. As to quaternary structure, homodimer. Part of the multimeric pyruvate dehydrogenase complex that contains multiple copies of pyruvate dehydrogenase (subunits PDHA (PDHA1 or PDHA2) and PDHB, E1), dihydrolipoamide acetyltransferase (DLAT, E2) and lipoamide dehydrogenase (DLD, E3). These subunits are bound to an inner core composed of about 48 DLAT and 12 PDHX molecules (by non covalent bonds). The 2-oxoglutarate dehydrogenase complex is composed of OGDH (2-oxoglutarate dehydrogenase; E1), DLST (dihydrolipoamide succinyltransferase; E2), DLD (dihydrolipoamide dehydrogenase; E3) and the assembly factor KGD4. It contains multiple copies of the three enzymatic components (E1, E2 and E3). In the nucleus, the 2-oxoglutarate dehydrogenase complex associates with KAT2A. Interacts with PDHX. Requires FAD as cofactor. Tyrosine phosphorylated. Expressed in liver (at protein level).

It localises to the mitochondrion matrix. It is found in the nucleus. The protein localises to the cell projection. The protein resides in the cilium. Its subcellular location is the flagellum. It localises to the cytoplasmic vesicle. It is found in the secretory vesicle. The protein localises to the acrosome. It catalyses the reaction N(6)-[(R)-dihydrolipoyl]-L-lysyl-[protein] + NAD(+) = N(6)-[(R)-lipoyl]-L-lysyl-[protein] + NADH + H(+). Its function is as follows. Lipoamide dehydrogenase is a component of the glycine cleavage system as well as an E3 component of three alpha-ketoacid dehydrogenase complexes (pyruvate-, alpha-ketoglutarate-, and branched-chain amino acid-dehydrogenase complex). The 2-oxoglutarate dehydrogenase complex is mainly active in the mitochondrion. A fraction of the 2-oxoglutarate dehydrogenase complex also localizes in the nucleus and is required for lysine succinylation of histones: associates with KAT2A on chromatin and provides succinyl-CoA to histone succinyltransferase KAT2A. In monomeric form may have additional moonlighting function as serine protease. Involved in the hyperactivation of spermatazoa during capacitation and in the spermatazoal acrosome reaction. This chain is Dihydrolipoyl dehydrogenase, mitochondrial (Dld), found in Mus musculus (Mouse).